Consider the following 302-residue polypeptide: MKLLLSAGAALAFVLGLCAAGSPPAQLSVHTVSWNSGHERAPTNLEELLGLNSGETPDVIAVAVQGFGFQTDKPQQGPACVKNFQSLLTSKGYTKLKNTITETMGLTVYCLEKHLDQNTLKNETIIVTVDDQKKSGGIVTSFTIYNKRFSFTTSRMSDEDVTSTNTKYAYDTRLDYSKKDDPSDFLFWIGDLNVRVETNATHAKSLVDQNNIDGLMAFDQLKKAKEQKLFDGWTEPQVTFKPTYKFKPNTDEYDLSATPSWTDRALYKSGTGKTIQPLSYNSLTNYKQTEHRPVLAKFRVTL.

The N-terminal stretch at 1-20 (MKLLLSAGAALAFVLGLCAA) is a signal peptide. A heme-binding site is contributed by cysteine 80.

Requires heme b as cofactor. The N-terminus is blocked. Expressed in salivary glands.

The protein resides in the secreted. Functionally, heme-based protein that delivers nitric oxide gas (NO) to the victim while feeding, resulting in vasodilation. In place of heme, the heme-binding cysteine can also reversibly bind NO when it is present in high concentrations. In Cimex lectularius (Bed bug), this protein is Nitrophorin Cim l NP.